The following is a 290-amino-acid chain: Protein 3 (290 aa).

In Lettuce big-vein associated virus (isolate Japan/Kagawa) (LBVaV), this protein is Protein 3.